A 209-amino-acid chain; its full sequence is dITP/XTP pyrophosphatase (209 aa).

7–12 (SSHGYK) contributes to the substrate binding site. Asp70 functions as the Proton acceptor in the catalytic mechanism. Asp70 provides a ligand contact to Mg(2+). Residues Ser71, 154-157 (FGYD), Lys177, and 182-183 (HR) contribute to the substrate site.

Belongs to the HAM1 NTPase family. In terms of assembly, homodimer. The cofactor is Mg(2+).

The catalysed reaction is XTP + H2O = XMP + diphosphate + H(+). It catalyses the reaction dITP + H2O = dIMP + diphosphate + H(+). The enzyme catalyses ITP + H2O = IMP + diphosphate + H(+). In terms of biological role, pyrophosphatase that catalyzes the hydrolysis of nucleoside triphosphates to their monophosphate derivatives, with a high preference for the non-canonical purine nucleotides XTP (xanthosine triphosphate), dITP (deoxyinosine triphosphate) and ITP. Seems to function as a house-cleaning enzyme that removes non-canonical purine nucleotides from the nucleotide pool, thus preventing their incorporation into DNA/RNA and avoiding chromosomal lesions. The chain is dITP/XTP pyrophosphatase from Chlamydia muridarum (strain MoPn / Nigg).